We begin with the raw amino-acid sequence, 856 residues long: MVSRSCANFLDLSSWDLLDFPQTPRTLPRVMTVPGIITDVDGDTTSEVTSTSGGSRERKIIVANMLPLQSKRDAETGKWCFNWDEDSLQLQLRDGFSSETEFLYVGSLNVDIETNEQEEVSQKLLEEFNCVATFLSQELQEMFYLGFCKHQLWPLFHYMLPMFPDHGDRFDRRLWQAYVSANKIFSDRVMEVINPEDDYVWIQDYHLMVLPTFLRKRFNRIKLGFFLHSPFPSSEIYRTLPVRDEILRGLLNCDLIGFHTFDYARHFLSCCSRMLGLDYESKRGHIGLDYFGRTVYIKILPVGVHMGRLESVLSLDSTAAKTKEIQEQFKGKKLVLGIDDMDIFKGISLKLIAMEHLFETYWHLKGKVVLVQIVNPARSSGKDVEEAKRETYETARRINERYGTSDYKPIVLIDRLVPRSEKTAYYAAADCCLVNAVRDGMNLVPYKYIVCRQGTRSNKAVVDSSPRTSTLVVSEFIGCSPSLSGAIRVNPWDVDAVAEAVNSALKMSETEKQLRHEKHYHYISTHDVGYWAKSFMQDLERACRDHYSKRCWGIGFGLGFRVLSLSPSFRKLSVEHIVPVYRKTQRRAIFLDYDGTLVPESSIVQDPSNEVVSVLKALCEDPNNTVFIVSGRGRESLSNWLSPCENLGIAAEHGYFIRWKSKDEWETCYSPTDTEWRSMVEPVMRSYMEATDGTSIEFKESALVWHHQDADPDFGSCQAKEMLDHLESVLANEPVVVKRGQHIVEVKPQGVSKGLAAEKVIREMVERGEPPEMVMCIGDDRSDEDMFESILSTVTNPELLVQPEVFACTVGRKPSKAKYFLDDEADVLKLLRGLGDSSSSLKPSSSHTQVAFESIV.

Position 5 is a phosphoserine (Ser5). Thr32 is modified (phosphothreonine). The glycosyltransferase stretch occupies residues 57–541 (ERKIIVANML…AKSFMQDLER (485 aa)).

In the N-terminal section; belongs to the glycosyltransferase 20 family. The protein in the C-terminal section; belongs to the trehalose phosphatase family. In terms of tissue distribution, expressed in leaves, roots, stems and flowers.

The catalysed reaction is D-glucose 6-phosphate + UDP-alpha-D-glucose = alpha,alpha-trehalose 6-phosphate + UDP + H(+). This chain is Probable alpha,alpha-trehalose-phosphate synthase [UDP-forming] 8 (TPS8), found in Arabidopsis thaliana (Mouse-ear cress).